The primary structure comprises 154 residues: CASP-like protein 5B2 (154 aa).

Residues 1–10 (MKKLLGGPGT) are Cytoplasmic-facing. A helical transmembrane segment spans residues 11–31 (VCGLLLRIGQCASAAASIGVM). Topologically, residues 32–42 (VSAKEFSVHTA) are extracellular. The helical transmembrane segment at 43-63 (FCYLIASMGLQLLWSFGLACL) threads the bilayer. The Cytoplasmic portion of the chain corresponds to 64 to 77 (DVYALRGKKDLQNP). The helical transmembrane segment at 78 to 98 (ILVSLFVVGDWVTAMLSLAAA) threads the bilayer. The Extracellular portion of the chain corresponds to 99 to 129 (CSSAGVVVLYEKDIKYCNTQSQYPCLRYEVA). Residues 130-150 (VALSFVTWIQIAVSSHVTFWI) traverse the membrane as a helical segment. The Cytoplasmic portion of the chain corresponds to 151 to 154 (LASV).

The protein belongs to the Casparian strip membrane proteins (CASP) family. In terms of assembly, homodimer and heterodimers. Expressed in the stele of the root.

Its subcellular location is the cell membrane. In Arabidopsis thaliana (Mouse-ear cress), this protein is CASP-like protein 5B2.